Reading from the N-terminus, the 1461-residue chain is MAAGGGGGSSKASSSSASSAGALESSLDRKFQSVTNTMESIQGLSSWCIENKKHHSTIVYHWMKWLRRSAYPHRLNLFYLANDVIQNCKRKNAIIFRESFADVLPEAAALVKDPSVSKSVERIFKIWEDRNVYPEEMIVALREALSTTFKTQKQLKENLNKQPNKQWKKSQTSTNPKAALKSKIVAEFRSQALIEELLLYKRSEDQIELKEKQLSTMRVDVCSTETLKCLKDKTGGKKFSKEFEEASSKLEEFVNGLDKQVKNGPSLTEALENAGIFYEAQYKEVKVVANAYKTFANRVNNLKKKLDQLKSTLPDPEESPVPSPSMDAPSPTGSESPFQGMGGEESQSPTMESEKSATPEPVTDNRDVEDMELSDVEDDGSKIIVEDRKEKPAEKSAVSTSVPTKPTENISKASSCTPVPVTMTATPPLPKPVNTSLSPSPALALPNLANVDLAKISSILSSLTSVMKNTGVSPASRPSPGTPTSPSNLTSGLKTPAPATTTSHNPLANILSKVEITPESILSALSKTQTQSAPALQGLSSLLQSVTGNPVPASEAASQSTSASPANTTVSTIKGRNLPSSAQPFIPKSFNYSPNSSTSEVSSTSASKASIGQSPGLPSTTFKLPSNSLGFTATHNTSPAAPPTEVTICQSSEVSKPKLESESTSPSLEMKIHNFLKGNPGFSGLNLNIPILSSLGSSAPSESHPSDFQRGPTSTSIDNIDGTPVRDERSGTPTQDEMMDKPTSSSVDTMSLLSKIISPGSSTPSSTRSPPPGRDESYPRELSNSVSTYRPFGLGSESPYKQPSDGMERPSSLMDSSQEKFYPDTSFQEDEDYRDFEYSGPPPSAMMNLEKKPAKSILKSSKLSDTTEYQPILSSYSHRAQEFGVKSAFPPSVRALLDSSENCDRLSSSPGLFGAFSVRGNEPGSDRSPSPSKNDSFFTPDSNHNSLSQSTTGHLSLPQKQYPDSPHPVPHRSLFSPQNTLAAPTGHPPTSGVEKVLASTISTTSTIEFKNMLKNASRKPSDDKHFGQAPSKGTPSDGVSLSNLTQPSLTATDQQQQEEHYRIETRVSSSCLDLPDSTEEKGAPIETLGYHSASNRRMSGEPIQTVESIRVPGKGNRGHGREASRVGWFDLSTSGSSFDNGPSSASELASLGGGGSGGLTGFKTAPYKERAPQFQESVGSFRSNSFNSTFEHHLPPSPLEHGTPFQREPVGPSSAPPVPPKDHGGIFSRDAPTHLPSVDLSNPFTKEAALAHAAPPPPPGEHSGIPFPTPPPPPPPGEHSSSGGSGVPFSTPPPPPPPVDHSGVVPFPAPPLAEHGVAGAVAVFPKDHSSLLQGTLAEHFGVLPGPRDHGGPTQRDLNGPGLSRVRESLTLPSHSLEHLGPPHGGGGGGGSNSSSGPPLGPSHRDTISRSGIILRSPRPDFRPREPFLSRDPFHSLKRPRPPFARGPPFFAPKRPFFPPRY.

N-acetylalanine is present on alanine 2. The residue at position 16 (serine 16) is a Phosphoserine. Positions 19 to 149 (SAGALESSLD…ALREALSTTF (131 aa)) constitute a CID domain. Disordered regions lie at residues 311-438 (STLP…TSLS) and 469-504 (NTGV…TTSH). A compositionally biased stretch (basic and acidic residues) spans 352–368 (ESEKSATPEPVTDNRDV). Serine 356 carries the phosphoserine modification. Threonine 358 carries the phosphothreonine modification. The span at 369-378 (EDMELSDVED) shows a compositional bias: acidic residues. Residue serine 374 is modified to Phosphoserine. Positions 379 to 394 (DGSKIIVEDRKEKPAE) are enriched in basic and acidic residues. The segment covering 397–416 (AVSTSVPTKPTENISKASSC) has biased composition (polar residues). Composition is skewed to low complexity over residues 417–426 (TPVPVTMTAT) and 473–491 (SPAS…NLTS). Phosphoserine occurs at positions 473, 476, and 479. Threonine 482 is subject to Phosphothreonine. Residue serine 485 is modified to Phosphoserine. A Phosphothreonine modification is found at threonine 517. A disordered region spans residues 547-623 (TGNPVPASEA…SPGLPSTTFK (77 aa)). The span at 553–566 (ASEAASQSTSASPA) shows a compositional bias: low complexity. A Phosphoserine modification is found at serine 564. The segment covering 567–583 (NTTVSTIKGRNLPSSAQ) has biased composition (polar residues). Serine 593 is subject to Phosphoserine. Residues 593–614 (SPNSSTSEVSSTSASKASIGQS) are compositionally biased toward low complexity. A Phosphothreonine modification is found at threonine 598. Phosphoserine is present on residues serine 614, serine 663, serine 665, and serine 716. Disordered regions lie at residues 696-849 (GSSA…MMNL), 900-997 (SENC…EKVL), 1016-1102 (ASRK…SGEP), 1132-1312 (STSG…APPL), and 1340-1461 (FGVL…PPRY). Threonine 723 is modified (phosphothreonine). Serine 730 bears the Phosphoserine mark. At threonine 732 the chain carries Phosphothreonine. The span at 742 to 752 (PTSSSVDTMSL) shows a compositional bias: polar residues. A phosphoserine mark is found at serine 758 and serine 762. The span at 758-768 (SPGSSTPSSTR) shows a compositional bias: low complexity. Threonine 763 bears the Phosphothreonine mark. Phosphoserine occurs at positions 769, 817, 826, 900, 909, 928, 965, and 976. Residues 927 to 954 (RSPSPSKNDSFFTPDSNHNSLSQSTTGH) show a composition bias toward polar residues. Polar residues predominate over residues 1031-1055 (SKGTPSDGVSLSNLTQPSLTATDQQ). Phosphoserine is present on residues serine 1068 and serine 1099. Over residues 1141–1150 (GPSSASELAS) the composition is skewed to low complexity. Positions 1151–1160 (LGGGGSGGLT) are enriched in gly residues. Positions 1174–1189 (FQESVGSFRSNSFNST) are enriched in polar residues. 2 stretches are compositionally biased toward pro residues: residues 1267 to 1277 (FPTPPPPPPPG) and 1290 to 1299 (STPPPPPPPV). Arginine 1366 is subject to Asymmetric dimethylarginine. A compositionally biased stretch (gly residues) spans 1382–1391 (PHGGGGGGGS). A compositionally biased stretch (basic and acidic residues) spans 1417–1434 (PRPDFRPREPFLSRDPFH). An asymmetric dimethylarginine mark is found at arginine 1424 and arginine 1430.

In terms of assembly, associates with the RNA polymerase II complex.

In Homo sapiens (Human), this protein is Regulation of nuclear pre-mRNA domain-containing protein 2 (RPRD2).